The chain runs to 455 residues: Epoxide hydrolase 1 (455 aa).

The chain crosses the membrane as a helical; Signal-anchor for type III membrane protein span at residues 1 to 21 (MWLELVLASLLGFVIYWFVSR). At 22–455 (DKEETLPLGD…RKFVSLAELQ (434 aa)) the chain is on the cytoplasmic side. The Nucleophile role is filled by Asp-226. Arg-295 bears the Dimethylated arginine mark. The active-site Proton donor is Tyr-374. The Proton acceptor role is filled by His-431. An N6-acetyllysine modification is found at Lys-439.

It belongs to the peptidase S33 family.

Its subcellular location is the microsome membrane. The protein resides in the endoplasmic reticulum membrane. It catalyses the reaction cis-stilbene oxide + H2O = (1R,2R)-hydrobenzoin. The enzyme catalyses 1-(4-methoxyphenyl)-N-methyl-N-[(3-methyloxetan-3-yl)methyl]methanamine + H2O = 2-{[(4-methoxybenzyl)(methyl)amino]methyl}-2-methylpropane-1,3-diol. It carries out the reaction 8,9-epoxy-(5Z,11Z,14Z)-eicosatrienoate + H2O = 8,9-dihydroxy-(5Z,11Z,14Z)-eicosatrienoate. The catalysed reaction is 11,12-epoxy-(5Z,8Z,14Z)-eicosatrienoate + H2O = 11,12-dihydroxy-(5Z,8Z,14Z)-eicosatrienoate. It catalyses the reaction 2-(5Z,8Z,11Z,14Z-eicosatetraenoyl)-glycerol + H2O = glycerol + (5Z,8Z,11Z,14Z)-eicosatetraenoate + H(+). With respect to regulation, inhibited by 10-hydroxystearamide and methoxy-arachidonyl fluorophosphate. In terms of biological role, biotransformation enzyme that catalyzes the hydrolysis of arene and aliphatic epoxides to less reactive and more water soluble dihydrodiols by the trans addition of water. May play a role in the metabolism of endogenous lipids such as epoxide-containing fatty acids. Metabolizes the abundant endocannabinoid 2-arachidonoylglycerol (2-AG) to free arachidonic acid (AA) and glycerol. Binds 20(S)-hydroxycholesterol (20(S)-OHC). This is Epoxide hydrolase 1 from Rattus norvegicus (Rat).